A 207-amino-acid chain; its full sequence is MARYIGPKCKLSRREGTDLFLKSARRSLDSKCKLDSKPGQHGRTSGARTSDYGLQLREKQKLKRMYGVLEKQFRKYFVEAERRRGNTGETLIQLLESRLDNVVYRMGFGSTRAEARQLVSHRAIELNGHTADIASMLVKAGDVISIREKAKKQGRIRESLDLAASIGLPQWVEVDASKMTGTFKSAPDRADVARDVNESMVVELYSR.

Positions 31–51 (KCKLDSKPGQHGRTSGARTSD) are disordered. The S4 RNA-binding domain maps to 97-162 (SRLDNVVYRM…QGRIRESLDL (66 aa)).

Belongs to the universal ribosomal protein uS4 family. As to quaternary structure, part of the 30S ribosomal subunit. Contacts protein S5. The interaction surface between S4 and S5 is involved in control of translational fidelity.

One of the primary rRNA binding proteins, it binds directly to 16S rRNA where it nucleates assembly of the body of the 30S subunit. Its function is as follows. With S5 and S12 plays an important role in translational accuracy. The chain is Small ribosomal subunit protein uS4 from Bordetella bronchiseptica (strain ATCC BAA-588 / NCTC 13252 / RB50) (Alcaligenes bronchisepticus).